The primary structure comprises 178 residues: MSRVAKCPIVIPSGVNVQLDLQDISIKGKYGHLSRTIHQSVKIEFLNNQIIFSPRLGFSNGWAQAGTSRALVNSMIIGVSEKFSKKLQLSGVGYRVSITKDNIINMSLGYSHIITYHLPKGINAENLSPTEIIIQGIDKQLVGQIAANLRSYRTPEPYKGKGIRYSNEVVRIKEAKKK.

This sequence belongs to the universal ribosomal protein uL6 family. In terms of assembly, part of the 50S ribosomal subunit.

In terms of biological role, this protein binds to the 23S rRNA, and is important in its secondary structure. It is located near the subunit interface in the base of the L7/L12 stalk, and near the tRNA binding site of the peptidyltransferase center. This is Large ribosomal subunit protein uL6 from Buchnera aphidicola subsp. Acyrthosiphon pisum (strain APS) (Acyrthosiphon pisum symbiotic bacterium).